The primary structure comprises 202 residues: Small ribosomal subunit protein uS4 (202 aa).

The interval 15-43 (LGDLPGLTRKAAKRSNPPGQHGNARRKRS) is disordered. In terms of domain architecture, S4 RNA-binding spans 90-152 (GRLDNVCFRL…KGSKKLAEGN (63 aa)).

It belongs to the universal ribosomal protein uS4 family. In terms of assembly, part of the 30S ribosomal subunit. Contacts protein S5. The interaction surface between S4 and S5 is involved in control of translational fidelity.

Its function is as follows. One of the primary rRNA binding proteins, it binds directly to 16S rRNA where it nucleates assembly of the body of the 30S subunit. Functionally, with S5 and S12 plays an important role in translational accuracy. This Prochlorococcus marinus (strain SARG / CCMP1375 / SS120) protein is Small ribosomal subunit protein uS4.